We begin with the raw amino-acid sequence, 182 residues long: ATP synthase subunit delta 2 (182 aa).

It belongs to the ATPase delta chain family. In terms of assembly, F-type ATPases have 2 components, F(1) - the catalytic core - and F(0) - the membrane proton channel. F(1) has five subunits: alpha(3), beta(3), gamma(1), delta(1), epsilon(1). F(0) has three main subunits: a(1), b(2) and c(10-14). The alpha and beta chains form an alternating ring which encloses part of the gamma chain. F(1) is attached to F(0) by a central stalk formed by the gamma and epsilon chains, while a peripheral stalk is formed by the delta and b chains.

Its subcellular location is the cell inner membrane. F(1)F(0) ATP synthase produces ATP from ADP in the presence of a proton or sodium gradient. F-type ATPases consist of two structural domains, F(1) containing the extramembraneous catalytic core and F(0) containing the membrane proton channel, linked together by a central stalk and a peripheral stalk. During catalysis, ATP synthesis in the catalytic domain of F(1) is coupled via a rotary mechanism of the central stalk subunits to proton translocation. Functionally, this protein is part of the stalk that links CF(0) to CF(1). It either transmits conformational changes from CF(0) to CF(1) or is implicated in proton conduction. The sequence is that of ATP synthase subunit delta 2 from Photobacterium profundum (strain SS9).